Consider the following 419-residue polypeptide: UDP-N-acetylglucosamine 1-carboxyvinyltransferase (419 aa).

22-23 (KN) contributes to the phosphoenolpyruvate binding site. A UDP-N-acetyl-alpha-D-glucosamine-binding site is contributed by Arg93. Catalysis depends on Cys117, which acts as the Proton donor. 2-(S-cysteinyl)pyruvic acid O-phosphothioketal is present on Cys117. Residues Asp307 and Ile329 each coordinate UDP-N-acetyl-alpha-D-glucosamine.

Belongs to the EPSP synthase family. MurA subfamily.

It is found in the cytoplasm. The catalysed reaction is phosphoenolpyruvate + UDP-N-acetyl-alpha-D-glucosamine = UDP-N-acetyl-3-O-(1-carboxyvinyl)-alpha-D-glucosamine + phosphate. It functions in the pathway cell wall biogenesis; peptidoglycan biosynthesis. Its function is as follows. Cell wall formation. Adds enolpyruvyl to UDP-N-acetylglucosamine. The polypeptide is UDP-N-acetylglucosamine 1-carboxyvinyltransferase (Shewanella putrefaciens (strain CN-32 / ATCC BAA-453)).